Reading from the N-terminus, the 496-residue chain is Glutamyl-tRNA(Gln) amidotransferase subunit A, mitochondrial (496 aa).

Active-site charge relay system residues include lysine 75 and serine 162. Serine 186 functions as the Acyl-ester intermediate in the catalytic mechanism.

It belongs to the amidase family. GatA subfamily. Subunit of the heterotrimeric GatCAB amidotransferase (AdT) complex, composed of A, B and C subunits.

It is found in the mitochondrion. The catalysed reaction is L-glutamyl-tRNA(Gln) + L-glutamine + ATP + H2O = L-glutaminyl-tRNA(Gln) + L-glutamate + ADP + phosphate + H(+). Functionally, allows the formation of correctly charged Gln-tRNA(Gln) through the transamidation of misacylated Glu-tRNA(Gln) in the mitochondria. The reaction takes place in the presence of glutamine and ATP through an activated gamma-phospho-Glu-tRNA(Gln). The chain is Glutamyl-tRNA(Gln) amidotransferase subunit A, mitochondrial from Pediculus humanus subsp. corporis (Body louse).